We begin with the raw amino-acid sequence, 90 residues long: Cell division topological specificity factor (90 aa).

It belongs to the MinE family.

Prevents the cell division inhibition by proteins MinC and MinD at internal division sites while permitting inhibition at polar sites. This ensures cell division at the proper site by restricting the formation of a division septum at the midpoint of the long axis of the cell. The chain is Cell division topological specificity factor from Brucella abortus (strain S19).